The chain runs to 442 residues: tRNA modification GTPase MnmE (442 aa).

Residues R21, E79, and K118 each contribute to the (6S)-5-formyl-5,6,7,8-tetrahydrofolate site. The 151-residue stretch at 215–365 (GLKIAIVGKP…LENKLSSYCN (151 aa)) folds into the TrmE-type G domain. GTP-binding positions include 225-230 (NVGKSS), 244-250 (TNEAGTT), and 269-272 (DTAG). Mg(2+)-binding residues include S229 and T250. K442 is a (6S)-5-formyl-5,6,7,8-tetrahydrofolate binding site.

The protein belongs to the TRAFAC class TrmE-Era-EngA-EngB-Septin-like GTPase superfamily. TrmE GTPase family. In terms of assembly, homodimer. Heterotetramer of two MnmE and two MnmG subunits. It depends on K(+) as a cofactor.

It is found in the cytoplasm. Its function is as follows. Exhibits a very high intrinsic GTPase hydrolysis rate. Involved in the addition of a carboxymethylaminomethyl (cmnm) group at the wobble position (U34) of certain tRNAs, forming tRNA-cmnm(5)s(2)U34. The chain is tRNA modification GTPase MnmE from Mycoplasma mobile (strain ATCC 43663 / 163K / NCTC 11711) (Mesomycoplasma mobile).